The primary structure comprises 215 residues: Ribose-5-phosphate isomerase A (215 aa).

Substrate-binding positions include 26-29 (TGST), 79-82 (DGAD), and 92-95 (KGGG). Catalysis depends on glutamate 101, which acts as the Proton acceptor. Lysine 119 serves as a coordination point for substrate.

The protein belongs to the ribose 5-phosphate isomerase family. In terms of assembly, homodimer.

The enzyme catalyses aldehydo-D-ribose 5-phosphate = D-ribulose 5-phosphate. The protein operates within carbohydrate degradation; pentose phosphate pathway; D-ribose 5-phosphate from D-ribulose 5-phosphate (non-oxidative stage): step 1/1. Its function is as follows. Catalyzes the reversible conversion of ribose-5-phosphate to ribulose 5-phosphate. The chain is Ribose-5-phosphate isomerase A from Xylella fastidiosa (strain 9a5c).